A 120-amino-acid chain; its full sequence is NAD(P)H-quinone oxidoreductase subunit 3, chloroplastic (120 aa).

3 helical membrane-spanning segments follow: residues 9–29 (IFWVFLIISSVIPILAFLISG), 64–84 (MFALVFVVFDVETVFLYPWAM), and 88–108 (VLGVSVFIEALIFVLILIVGL).

It belongs to the complex I subunit 3 family. In terms of assembly, NDH is composed of at least 16 different subunits, 5 of which are encoded in the nucleus.

The protein localises to the plastid. It localises to the chloroplast thylakoid membrane. The enzyme catalyses a plastoquinone + NADH + (n+1) H(+)(in) = a plastoquinol + NAD(+) + n H(+)(out). The catalysed reaction is a plastoquinone + NADPH + (n+1) H(+)(in) = a plastoquinol + NADP(+) + n H(+)(out). Its function is as follows. NDH shuttles electrons from NAD(P)H:plastoquinone, via FMN and iron-sulfur (Fe-S) centers, to quinones in the photosynthetic chain and possibly in a chloroplast respiratory chain. The immediate electron acceptor for the enzyme in this species is believed to be plastoquinone. Couples the redox reaction to proton translocation, and thus conserves the redox energy in a proton gradient. The sequence is that of NAD(P)H-quinone oxidoreductase subunit 3, chloroplastic from Cucumis sativus (Cucumber).